The primary structure comprises 602 residues: Elongation factor 4 (602 aa).

The tr-type G domain maps to 7–188 (ENIRNFSIIA…SIIRLVPPPK (182 aa)). GTP contacts are provided by residues 19–24 (DHGKST) and 135–138 (NKID).

The protein belongs to the TRAFAC class translation factor GTPase superfamily. Classic translation factor GTPase family. LepA subfamily.

The protein localises to the cell inner membrane. It carries out the reaction GTP + H2O = GDP + phosphate + H(+). Required for accurate and efficient protein synthesis under certain stress conditions. May act as a fidelity factor of the translation reaction, by catalyzing a one-codon backward translocation of tRNAs on improperly translocated ribosomes. Back-translocation proceeds from a post-translocation (POST) complex to a pre-translocation (PRE) complex, thus giving elongation factor G a second chance to translocate the tRNAs correctly. Binds to ribosomes in a GTP-dependent manner. The chain is Elongation factor 4 from Chlamydia trachomatis serovar A (strain ATCC VR-571B / DSM 19440 / HAR-13).